Reading from the N-terminus, the 115-residue chain is DNA-binding protein TV0008 (115 aa).

The tract at residues 18–37 (LQRQAMQRQMAEEEEKQREI) is disordered.

It belongs to the PDCD5 family.

The polypeptide is DNA-binding protein TV0008 (Thermoplasma volcanium (strain ATCC 51530 / DSM 4299 / JCM 9571 / NBRC 15438 / GSS1)).